The primary structure comprises 24 residues: 60 kDa chaperonin, mitochondrial (24 aa).

The protein belongs to the chaperonin (HSP60) family. As to quaternary structure, forms a single seven-member ring complex, in tight association with the p63 protein. Testis.

The protein resides in the mitochondrion. Its function is as follows. Implicated in mitochondrial protein import and macromolecular assembly. May facilitate the correct folding of imported proteins. May also prevent misfolding and promote the refolding and proper assembly of unfolded polypeptides generated under stress conditions in the mitochondrial matrix. The protein is 60 kDa chaperonin, mitochondrial of Heliothis virescens (Tobacco budworm moth).